The chain runs to 327 residues: Fumigatonoid B endoperoxide isomerase nvfE (327 aa).

A disordered region spans residues methionine 1–leucine 22. Fe cation-binding residues include histidine 152, aspartate 154, and histidine 234.

It belongs to the PhyH family. Homodimer. Requires Fe cation as cofactor.

It catalyses the reaction fumigatonoid B = fumigatonoid C. Its pathway is secondary metabolite biosynthesis; terpenoid biosynthesis. Fumigatonoid B endoperoxide isomerase; part of the gene cluster that mediates the biosynthesis of novofumigatonin, a heavily oxygenated meroterpenoid containing a unique orthoester moiety. The first step of the pathway is the synthesis of 3,5-dimethylorsellinic acid (DMOA) by the polyketide synthase nvfA via condensation of one acetyl-CoA starter unit with 3 malonyl-CoA units and 2 methylations. DMOA is then converted to farnesyl-DMOA by the farnesyltransferase nvfB. Epoxydation by FAD-dependent monooxygenase nvfK, followed by a protonation-initiated cyclization catalyzed by the terpene cyclase nvfL leads to the production of asnavolin H. The short chain dehydrogenase nvfC then as a 3-OH dehydrogenase of asnovolin H to yield chemesin D. There are two branches to synthesize asnovolin A from chemesin D. In one branch, chemesin D undergoes Baeyer-Villiger oxidation by nvfH, methylation by nvfJ, and enoyl reduction by the nvfM D enoylreductase that reduces the double bond between C-5'and C-6', to form respectively asnovolin I, asnovolin K, and asnovolin A. In the other branch, the methylation precedes the Baeyer-Villiger oxidation and the enoyl reduction to yield asnovolin A via the asnovolin J intermediate. Asnovolin A is further converted to fumigatonoid A by the Fe(II)/2-oxoglutarate-dependent dioxygenase nvfI that catalyzes an endoperoxidation reaction. The alpha/beta hydrolase nvfD then acts as an epimerase that converts fumigatonoid A to its C-5' epimer, which then undergoes spontaneous or nvfD-catalyzed lactonization. The following step utilizes the ketoreductase nvfG to produce fumigatonoid B. The dioxygenase nvfE further converts fumigatonoid B into fumigatonoid C. Finally the Fe(II)/2-oxoglutarate-dependent dioxygenase nvfF catalyzes two rounds of oxidation to transform fumigatonoid C into the end product, novofumigatonin A. The polypeptide is Fumigatonoid B endoperoxide isomerase nvfE (Aspergillus novofumigatus (strain IBT 16806)).